Reading from the N-terminus, the 485-residue chain is BTB/POZ domain-containing protein YLR108C (485 aa).

The region spanning Glu26 to Thr121 is the BTB domain.

It is found in the nucleus. This is BTB/POZ domain-containing protein YLR108C from Saccharomyces cerevisiae (strain ATCC 204508 / S288c) (Baker's yeast).